A 408-amino-acid chain; its full sequence is Serine/threonine transporter SstT (408 aa).

Transmembrane regions (helical) follow at residues 11 to 31 (LANG…VSLA), 43 to 63 (FLGS…VFIL), 82 to 102 (IVVL…VLSM), 141 to 161 (ALMT…GLAL), 192 to 212 (IGIF…AIAG), 216 to 236 (LLAV…PLIV), 290 to 310 (IPLG…VLTL), 316 to 336 (LGIQ…AISA), and 363 to 383 (VAMQ…AAET).

It belongs to the dicarboxylate/amino acid:cation symporter (DAACS) (TC 2.A.23) family.

The protein localises to the cell inner membrane. The catalysed reaction is L-serine(in) + Na(+)(in) = L-serine(out) + Na(+)(out). It catalyses the reaction L-threonine(in) + Na(+)(in) = L-threonine(out) + Na(+)(out). Functionally, involved in the import of serine and threonine into the cell, with the concomitant import of sodium (symport system). This chain is Serine/threonine transporter SstT, found in Shewanella sp. (strain ANA-3).